We begin with the raw amino-acid sequence, 378 residues long: MKILVDENMPYARDLFSRLGEVTAVPGRPIPVAQLADADALMVRSVTKVNESLLAGKPIKFVGTATAGTDHVDEAWLKQAGIGFSAAPGCNAIAVVEYVFSSLLMLAERDGFSLHDRTVGIVGVGNVGRRLQARLEALGIKTLLCDPPRADRGDEGDFRSLDELVQHADILTFHTPLFKDGPYKTLHLADEKLIRSLKPGAILINACRGAVVDNTALLTCLNEGQKLSVVLDVWEGEPELNVELLTKVDIGTPHIAGYTLEGKARGTTQVFEAYSKFIGHEQHVALDTLLPAPEFGRITLHGPLDQPTLKRLVHLVYDVRRDDAPLRKVAGIPGEFDKLRKNYLERREWSSLYVICDDASAASLLCKLGFNAVHHPAR.

Residues S45 and T66 each coordinate substrate. Positions 146 and 175 each coordinate NAD(+). R208 is an active-site residue. D232 is an NAD(+) binding site. E237 is an active-site residue. Residue H254 is the Proton donor of the active site. Residue G257 participates in NAD(+) binding. Y258 contacts substrate.

Belongs to the D-isomer specific 2-hydroxyacid dehydrogenase family. PdxB subfamily. In terms of assembly, homodimer.

Its subcellular location is the cytoplasm. It carries out the reaction 4-phospho-D-erythronate + NAD(+) = (R)-3-hydroxy-2-oxo-4-phosphooxybutanoate + NADH + H(+). It participates in cofactor biosynthesis; pyridoxine 5'-phosphate biosynthesis; pyridoxine 5'-phosphate from D-erythrose 4-phosphate: step 2/5. Functionally, catalyzes the oxidation of erythronate-4-phosphate to 3-hydroxy-2-oxo-4-phosphonooxybutanoate. The sequence is that of Erythronate-4-phosphate dehydrogenase from Escherichia coli O8 (strain IAI1).